Reading from the N-terminus, the 711-residue chain is Nucleolin (711 aa).

Positions 1–304 are disordered; sequence MVKLAKAGKN…KKQKVEGTEP (304 aa). Residues Lys-9, Lys-15, and Lys-16 each carry the N6-acetyllysine modification. A compositionally biased stretch (acidic residues) spans 24–43; that stretch reads VEEDSEDEEMSEDEEDDSSG. Phosphoserine occurs at positions 28, 34, 41, and 42. Residues 56 to 107 are compositionally biased toward low complexity; that stretch reads AAATSAKKVVVSPTKKVAVATPAKKAAVTPGKKAAATPAKKTVTPAKAVATP. Repeat 1 spans residues 58–65; sequence ATSAKKVV. The 8 X 8 AA tandem repeats of X-T-P-X-K-K-X-X stretch occupies residues 58-135; that stretch reads ATSAKKVVVS…GAAIPAKGAK (78 aa). Residue Ser-67 is modified to Phosphoserine. Phosphothreonine is present on residues Thr-69, Thr-76, Thr-84, and Thr-92. 3 tandem repeats follow at residues 75–82, 83–90, and 91–98. Position 96 is an N6-acetyllysine (Lys-96). At Thr-99 the chain carries Phosphothreonine. The stretch at 99 to 104 is one 5; truncated repeat; it reads TPAKAV. The residue at position 102 (Lys-102) is an N6-acetyllysine. Repeat unit 6 spans residues 105–112; it reads ATPGKKGA. Residue Thr-106 is modified to Phosphothreonine. Position 109 is an N6-acetyllysine (Lys-109). Position 113 is a phosphothreonine (Thr-113). Lys-116 carries the N6-acetyllysine modification. 2 repeat units span residues 120–127 and 128–135. Thr-121 carries the post-translational modification Phosphothreonine. A compositionally biased stretch (low complexity) spans 122-137; sequence PGKKGAAIPAKGAKNG. N6-acetyllysine is present on Lys-124. Phosphoserine occurs at positions 145, 153, 184, and 207. Composition is skewed to acidic residues over residues 145–171 and 184–212; these read SDEE…DEIE and SEDE…EEAM. Thr-215 carries the post-translational modification Phosphothreonine. Residues 235-273 are compositionally biased toward acidic residues; sequence EDEDEEEDDEDEDDDDDEDDEDEDDDDEDEEEEEEEEEP. Positions 274 to 301 are enriched in basic and acidic residues; the sequence is VKEAPGKRKKEMAKQKAAPEAKKQKVEG. A Glycyl lysine isopeptide (Lys-Gly) (interchain with G-Cter in SUMO1); alternate cross-link involves residue Lys-298. Lys-298 participates in a covalent cross-link: Glycyl lysine isopeptide (Lys-Gly) (interchain with G-Cter in SUMO2); alternate. Phosphothreonine is present on Thr-302. RRM domains lie at 308–384 and 394–467; these read FNLF…KPKG and RTLL…YTGE. Lys-319 is subject to N6-acetyllysine. Lys-325 is covalently cross-linked (Glycyl lysine isopeptide (Lys-Gly) (interchain with G-Cter in SUMO1); alternate). Lys-325 is covalently cross-linked (Glycyl lysine isopeptide (Lys-Gly) (interchain with G-Cter in SUMO2); alternate). Residue Lys-349 is modified to N6-acetyllysine. At Ser-357 the chain carries Phosphoserine. Thr-368 is subject to Phosphothreonine. Lys-371 participates in a covalent cross-link: Glycyl lysine isopeptide (Lys-Gly) (interchain with G-Cter in SUMO2). A Glycyl lysine isopeptide (Lys-Gly) (interchain with G-Cter in SUMO2); alternate cross-link involves residue Lys-378. N6-acetyllysine; alternate is present on Lys-378. Lys-399 and Lys-404 each carry N6-acetyllysine. A Phosphothreonine modification is found at Thr-406. 2 positions are modified to N6-acetyllysine: Lys-428 and Lys-445. Residues Ser-459 and Ser-461 each carry the phosphoserine modification. 2 positions are modified to N6-acetyllysine: Lys-468 and Lys-478. Residues 487–561 form the RRM 3 domain; it reads KTLVLSNLSY…RAIRLELQGP (75 aa). Lys-514 is covalently cross-linked (Glycyl lysine isopeptide (Lys-Gly) (interchain with G-Cter in SUMO2); alternate). The residue at position 514 (Lys-514) is an N6-acetyllysine; alternate. Position 522 is an N6-acetyllysine (Lys-522). Phosphoserine is present on Ser-564. N6-acetyllysine is present on Lys-573. The 76-residue stretch at 573-648 folds into the RRM 4 domain; it reads KTLFVKGLSE…NKVTLDWAKP (76 aa). Lys-578 participates in a covalent cross-link: Glycyl lysine isopeptide (Lys-Gly) (interchain with G-Cter in SUMO2); alternate. Lys-578 bears the N6-acetyllysine; alternate mark. Ser-581 carries the phosphoserine modification. Lys-590 is covalently cross-linked (Glycyl lysine isopeptide (Lys-Gly) (interchain with G-Cter in SUMO1); alternate). Lys-590 is covalently cross-linked (Glycyl lysine isopeptide (Lys-Gly) (interchain with G-Cter in SUMO2); alternate). 2 positions are modified to phosphoserine: Ser-592 and Ser-620. Residue Lys-625 forms a Glycyl lysine isopeptide (Lys-Gly) (interchain with G-Cter in SUMO2) linkage. The segment at 641-711 is disordered; that stretch reads VTLDWAKPKG…KPQGKKTKFE (71 aa). Lys-647 is modified (N6-acetyllysine). The segment covering 651 to 697 has biased composition (gly residues); it reads EGGFGGRGGGRGGFGGRGGGRGGRGGFGGRGRGGFGGRGGFRGGRGG. An asymmetric dimethylarginine mark is found at Arg-657, Arg-661, Arg-667, Arg-671, Arg-674, Arg-680, Arg-682, Arg-688, and Arg-692. Arg-695 is subject to Asymmetric dimethylarginine; alternate. The residue at position 695 (Arg-695) is an Omega-N-methylarginine; alternate. The segment covering 698 to 711 has biased composition (basic and acidic residues); it reads GGDHKPQGKKTKFE.

In terms of assembly, identified in a IGF2BP1-dependent mRNP granule complex containing untranslated mRNAs. Component of the SWAP complex that consists of NPM1, NCL/nucleolin, PARP1 and SWAP70. Component of a complex which is at least composed of HTATSF1/Tat-SF1, the P-TEFb complex components CDK9 and CCNT1, RNA polymerase II, SUPT5H, and NCL/nucleolin. Interacts with AICDA. Interacts with APTX. Interacts with C1QBP. Interacts with ERBB4. Interacts (via C-terminus) with FMR1 isoform 6 (via N-terminus). Interacts with GZF1; this interaction is important for nucleolar localization of GZF1. Interacts with NSUN2. Interacts with NVL. Interacts (via N-terminus domain) with SETX. Interacts (via RRM1 and C-terminal RRM4/Arg/Gly-rich domains) with TERT; the interaction is important for nucleolar localization of TERT. Interacts with WDR46. Interacts with ZFP36. Interacts with LRRC34. Interacts with RRP1B. Interacts with HNRNPU; this interaction occurs during mitosis. Interacts with RIOK1; RIOK1 recruits NCL to PRMT5 for symmetrically methylation. Interacts with ZBTB7B. Interacts with MDK; this interaction promotes NCL clustering and lateral movements of this complex into lipid rafts leading to MDK internalization. Interacts with HDGF. Interacts with ALKBH2. Interacts with IGFBP5; this interaction is necessary for IGFBP5 localization to the nucleus. In terms of processing, some glutamate residues are glycylated by TTLL8. This modification occurs exclusively on glutamate residues and results in a glycine chain on the gamma-carboxyl group. Post-translationally, symmetrically methylated by PRMT5.

It is found in the nucleus. Its subcellular location is the nucleolus. The protein resides in the cytoplasm. Functionally, nucleolin is the major nucleolar protein of growing eukaryotic cells. It is found associated with intranucleolar chromatin and pre-ribosomal particles. It induces chromatin decondensation by binding to histone H1. It is thought to play a role in pre-rRNA transcription and ribosome assembly. May play a role in the process of transcriptional elongation. Binds RNA oligonucleotides with 5'-UUAGGG-3' repeats more tightly than the telomeric single-stranded DNA 5'-TTAGGG-3' repeats. This is Nucleolin (NCL) from Macaca fascicularis (Crab-eating macaque).